The sequence spans 1043 residues: Constitutive coactivator of PPAR-gamma-like protein 1 homolog (1043 aa).

Disordered regions lie at residues 353-497 and 929-1043; these read SMVP…HMQI and YGRG…NKEE. Composition is skewed to polar residues over residues 362–375 and 405–419; these read QMLNIPQGSVQSRP and SPINPAQSGSPNHVD. Basic and acidic residues-rich tracts occupy residues 451–471 and 951–964; these read TWDKGKKSEKANKKDSTEQAK and EVAKELKTQSEDSK. The interval 801-1043 is RNA binding; that stretch reads VELATKVEKM…LEGAVANKEE (243 aa). Over residues 995 to 1010 the composition is skewed to low complexity; sequence EARASSNSESALSSDS.

The protein belongs to the constitutive coactivator of PPAR-gamma family.

Its subcellular location is the cytoplasm. It is found in the cell membrane. Functionally, may bee involved in the oxidative stress-induced survival signaling. Binds RNA. May participate in mRNA transport in the cytoplasm. The protein is Constitutive coactivator of PPAR-gamma-like protein 1 homolog (fam120a) of Xenopus tropicalis (Western clawed frog).